The chain runs to 127 residues: Aspartate 1-decarboxylase (127 aa).

The active-site Schiff-base intermediate with substrate; via pyruvic acid is Ser25. The residue at position 25 (Ser25) is a Pyruvic acid (Ser). Thr57 serves as a coordination point for substrate. Residue Tyr58 is the Proton donor of the active site. 73–75 (GAA) provides a ligand contact to substrate.

This sequence belongs to the PanD family. As to quaternary structure, heterooctamer of four alpha and four beta subunits. Requires pyruvate as cofactor. In terms of processing, is synthesized initially as an inactive proenzyme, which is activated by self-cleavage at a specific serine bond to produce a beta-subunit with a hydroxyl group at its C-terminus and an alpha-subunit with a pyruvoyl group at its N-terminus.

It localises to the cytoplasm. The catalysed reaction is L-aspartate + H(+) = beta-alanine + CO2. Its pathway is cofactor biosynthesis; (R)-pantothenate biosynthesis; beta-alanine from L-aspartate: step 1/1. Catalyzes the pyruvoyl-dependent decarboxylation of aspartate to produce beta-alanine. The sequence is that of Aspartate 1-decarboxylase from Trichormus variabilis (strain ATCC 29413 / PCC 7937) (Anabaena variabilis).